A 157-amino-acid polypeptide reads, in one-letter code: Histone H2B.3 (157 aa).

The interval 1-64 is disordered; that stretch reads MAPKKEEKPA…DKKSKKKAKV (64 aa). Positions 26-42 are enriched in basic residues; that stretch reads KAVKAPKKKEKKAPAKK. A Glycyl lysine isopeptide (Lys-Gly) (interchain with G-Cter in ubiquitin) cross-link involves residue Lys153.

Belongs to the histone H2B family. The nucleosome is a histone octamer containing two molecules each of H2A, H2B, H3 and H4 assembled in one H3-H4 heterotetramer and two H2A-H2B heterodimers. The octamer wraps approximately 147 bp of DNA. Post-translationally, monoubiquitinated to form H2BK143ub1; may give a specific tag for epigenetic transcriptional activation.

It is found in the nucleus. It localises to the chromosome. Its function is as follows. Core component of nucleosome. Nucleosomes wrap and compact DNA into chromatin, limiting DNA accessibility to the cellular machineries which require DNA as a template. Histones thereby play a central role in transcription regulation, DNA repair, DNA replication and chromosomal stability. DNA accessibility is regulated via a complex set of post-translational modifications of histones, also called histone code, and nucleosome remodeling. This Volvox carteri (Green alga) protein is Histone H2B.3.